Consider the following 126-residue polypeptide: uncharacterized protein (126 aa).

In terms of domain architecture, VOC spans 4 to 126 (RIDHTGIMVR…DGEWIEFFQR (123 aa)). A divalent metal cation contacts are provided by His7, Glu42, His74, and Glu122.

The protein belongs to the glyoxalase I family.

This is an uncharacterized protein from Bacillus subtilis (strain 168).